Here is a 576-residue protein sequence, read N- to C-terminus: Quinone-reactive Ni/Fe-hydrogenase large chain (576 aa).

4 residues coordinate Ni(2+): Cys-62, Cys-65, Cys-547, and Cys-550.

The protein belongs to the [NiFe]/[NiFeSe] hydrogenase large subunit family. Heterodimer of a large and a small subunit. Requires Ni(2+) as cofactor.

The protein resides in the cell membrane. The enzyme catalyses H2 + a menaquinone = a menaquinol. Its function is as follows. This enzyme recycles the H(2) produced by nitrogenase to increase the production of ATP and to protect nitrogenase against inhibition or damage by O(2) under carbon- or phosphate-limited conditions. The polypeptide is Quinone-reactive Ni/Fe-hydrogenase large chain (hydB) (Wolinella succinogenes (strain ATCC 29543 / DSM 1740 / CCUG 13145 / JCM 31913 / LMG 7466 / NCTC 11488 / FDC 602W) (Vibrio succinogenes)).